Consider the following 527-residue polypeptide: Succinate-semialdehyde dehydrogenase, mitochondrial (527 aa).

The transit peptide at 1-35 (MAMAMAMRRAAALGARHILAASSTSSSGVLLRRHM) directs the protein to the mitochondrion. Residues R208, 223-226 (KPSE), and 276-281 (GSTAVG) contribute to the NAD(+) site. A substrate-binding site is contributed by R208. Catalysis depends on E298, which acts as the Proton acceptor. 3 residues coordinate substrate: R326, C332, and S489. The active-site Nucleophile is C332. The cysteines at positions 332 and 334 are disulfide-linked.

It belongs to the aldehyde dehydrogenase family. As to quaternary structure, homotetramer.

Its subcellular location is the mitochondrion matrix. The catalysed reaction is succinate semialdehyde + NAD(+) + H2O = succinate + NADH + 2 H(+). The protein operates within amino-acid degradation; 4-aminobutanoate degradation. Redox-regulated. Inhibited under oxydizing conditions. Oxidizes specifically succinate semialdehyde. Involved in plant response to environmental stress by preventing the accumulation of reactive oxygen species. The sequence is that of Succinate-semialdehyde dehydrogenase, mitochondrial (ALDH5F1) from Oryza sativa subsp. japonica (Rice).